The primary structure comprises 224 residues: Ribose-5-phosphate isomerase A (224 aa).

Residues 32-35 (TGST), 85-88 (DGAD), and 98-101 (KGGG) each bind substrate. The Proton acceptor role is filled by glutamate 107. A substrate-binding site is contributed by lysine 125.

This sequence belongs to the ribose 5-phosphate isomerase family. In terms of assembly, homodimer.

The enzyme catalyses aldehydo-D-ribose 5-phosphate = D-ribulose 5-phosphate. It participates in carbohydrate degradation; pentose phosphate pathway; D-ribose 5-phosphate from D-ribulose 5-phosphate (non-oxidative stage): step 1/1. In terms of biological role, catalyzes the reversible conversion of ribose-5-phosphate to ribulose 5-phosphate. The sequence is that of Ribose-5-phosphate isomerase A from Pseudomonas putida (strain W619).